A 78-amino-acid polypeptide reads, in one-letter code: Acyl carrier protein (78 aa).

One can recognise a Carrier domain in the interval 2–77 (STIEERVKKI…AAIDYVTSHQ (76 aa)). An O-(pantetheine 4'-phosphoryl)serine modification is found at S37.

Belongs to the acyl carrier protein (ACP) family. 4'-phosphopantetheine is transferred from CoA to a specific serine of apo-ACP by AcpS. This modification is essential for activity because fatty acids are bound in thioester linkage to the sulfhydryl of the prosthetic group.

It localises to the cytoplasm. It participates in lipid metabolism; fatty acid biosynthesis. In terms of biological role, carrier of the growing fatty acid chain in fatty acid biosynthesis. The protein is Acyl carrier protein of Pseudomonas fluorescens (strain SBW25).